The following is a 353-amino-acid chain: UPF0283 membrane protein YcjF (353 aa).

A compositionally biased stretch (basic and acidic residues) spans 1 to 19 (MSEPLKPRIDFAEPLKEES). The tract at residues 1-29 (MSEPLKPRIDFAEPLKEESTSTFKAQQTF) is disordered. Over residues 20-29 (TSTFKAQQTF) the composition is skewed to polar residues. 3 helical membrane-spanning segments follow: residues 70 to 90 (MVLG…IQWT), 100 to 120 (AALG…GSVI), and 213 to 233 (ESTL…FIAW).

This sequence belongs to the UPF0283 family.

The protein resides in the cell inner membrane. The polypeptide is UPF0283 membrane protein YcjF (Salmonella arizonae (strain ATCC BAA-731 / CDC346-86 / RSK2980)).